Consider the following 608-residue polypeptide: Rap1 GTPase-GDP dissociation stimulator 1 (608 aa).

2 ARM repeats span residues 89 to 131 and 171 to 212; these read GLIS…DQAG and DSLQ…NLAE. The interval 122-171 is prevents binding to prenylated RHOA; it reads EGRSAVDQAGGAQIVVDHLRSLCSKTDPASEKLLTVFCGMLMNYSNEKND. Residue Lys-231 is modified to N6-acetyllysine. 3 ARM repeats span residues 348–391, 392–432, and 480–520; these read DGNC…NLAI, PVVN…MLID, and SKDV…LIAA.

In terms of assembly, interacts with RABL3. Interacts with RHOT1. As to quaternary structure, interacts with unprenylated RHOA; the interaction is direct. Interacts with RAP1A. Interacts with KRAS. Interacts with RAC1. Interacts with RAP1B. Preferentially interacts with unprenylated GTPases that will become geranylgeranylated. May also interact with prenylated GTPases. Interacts with prenylated RHOA; the interaction is direct and in a 1:1 stoichiometry. Interacts with RAP1A. Interacts with KRAS. Interacts with RAC1. Interacts with RAP1B. Preferentially interacts with prenylated GTPases. Post-translationally, the N-terminus is blocked. Forms covalent cross-links mediated by transglutaminase TGM2, between a glutamine and the epsilon-amino group of a lysine residue, forming homopolymers and heteropolymers. As to expression, brain.

The protein resides in the cytoplasm. It is found in the cytosol. It localises to the endoplasmic reticulum. Its subcellular location is the mitochondrion. The protein localises to the nucleus. Acts as a GEF (guanine nucleotide exchange factor) for the Rho family of small GTP-binding proteins (G proteins) that stimulates the dissociation of GDP to enable subsequent binding of GTP. Additionally, appears to chaperone the processing and/or trafficking of small GTPases containing a C-terminal polybasic region independently of GEF activity. Targets include RAP1A/RAP1B, RHOA, RHOB, RHOC, RAC1 and KRAS. Regulates mitochondrial dynamics by controlling RHOT function to promote mitochondrial fission during high calcium conditions. Able to promote the Ca(2+) release from the endoplasmic reticulum via both inositol trisphosphate (Ins3P) and ryanodine sensitive receptors leading to a enhanced mitochondrial Ca(2+) uptake. Its function is as follows. Acts as a GEF (guanine nucleotide exchange factor) for unprenylated RHOA. Chaperones the entry and passage of small GTPases through the prenylation pathway. Recognizes the last amino acid in the GTPase C-terminal CAAX motif with a preference for 'Leu' over 'Met', indicating involvement in the geranylgeranylation pathway. May also recognize prenylated GTPases. In terms of biological role, acts as a GEF (guanine nucleotide exchange factor) for prenylated RHOA. Acts as a GEF for RHOC. Chaperones the downstream trafficking and/or processing of small newly prenylated GTPases. Escorts RAC1 to the nucleus. This is Rap1 GTPase-GDP dissociation stimulator 1 (RAP1GDS1) from Bos taurus (Bovine).